A 123-amino-acid chain; its full sequence is Small ribosomal subunit protein uS12cz/uS12cy (123 aa).

Belongs to the universal ribosomal protein uS12 family. In terms of assembly, part of the 30S ribosomal subunit.

It localises to the plastid. The protein localises to the chloroplast. With S4 and S5 plays an important role in translational accuracy. Located at the interface of the 30S and 50S subunits. The protein is Small ribosomal subunit protein uS12cz/uS12cy (rps12-A) of Eucalyptus globulus subsp. globulus (Tasmanian blue gum).